Here is a 76-residue protein sequence, read N- to C-terminus: Sec-independent protein translocase protein TatA (76 aa).

Residues 1 to 21 (MGSFSIWHWLIVLAVVLLLFG) form a helical membrane-spanning segment. Residues 43–76 (MSDEDAKDDARDSGRTIDAKADETVNDVKKTTKS) are disordered. Residues 50 to 76 (DDARDSGRTIDAKADETVNDVKKTTKS) are compositionally biased toward basic and acidic residues.

This sequence belongs to the TatA/E family. As to quaternary structure, the Tat system comprises two distinct complexes: a TatABC complex, containing multiple copies of TatA, TatB and TatC subunits, and a separate TatA complex, containing only TatA subunits. Substrates initially bind to the TatABC complex, which probably triggers association of the separate TatA complex to form the active translocon.

It is found in the cell inner membrane. Part of the twin-arginine translocation (Tat) system that transports large folded proteins containing a characteristic twin-arginine motif in their signal peptide across membranes. TatA could form the protein-conducting channel of the Tat system. This Brucella anthropi (strain ATCC 49188 / DSM 6882 / CCUG 24695 / JCM 21032 / LMG 3331 / NBRC 15819 / NCTC 12168 / Alc 37) (Ochrobactrum anthropi) protein is Sec-independent protein translocase protein TatA.